Reading from the N-terminus, the 341-residue chain is tRNA N6-adenosine threonylcarbamoyltransferase (341 aa).

The Fe cation site is built by histidine 114 and histidine 118. Substrate contacts are provided by residues 136-140, aspartate 170, glycine 183, aspartate 187, and asparagine 275; that span reads LVSGG. Aspartate 303 serves as a coordination point for Fe cation.

This sequence belongs to the KAE1 / TsaD family. It depends on Fe(2+) as a cofactor.

It is found in the cytoplasm. The catalysed reaction is L-threonylcarbamoyladenylate + adenosine(37) in tRNA = N(6)-L-threonylcarbamoyladenosine(37) in tRNA + AMP + H(+). Required for the formation of a threonylcarbamoyl group on adenosine at position 37 (t(6)A37) in tRNAs that read codons beginning with adenine. Is involved in the transfer of the threonylcarbamoyl moiety of threonylcarbamoyl-AMP (TC-AMP) to the N6 group of A37, together with TsaE and TsaB. TsaD likely plays a direct catalytic role in this reaction. This is tRNA N6-adenosine threonylcarbamoyltransferase from Mycobacterium avium (strain 104).